Reading from the N-terminus, the 334-residue chain is Ribosomal RNA large subunit methyltransferase F (334 aa).

The disordered stretch occupies residues 1–25; that stretch reads MPRPSSPRPDAERKSASPLHPRNRH.

The protein belongs to the methyltransferase superfamily. METTL16/RlmF family.

It localises to the cytoplasm. It catalyses the reaction adenosine(1618) in 23S rRNA + S-adenosyl-L-methionine = N(6)-methyladenosine(1618) in 23S rRNA + S-adenosyl-L-homocysteine + H(+). Its function is as follows. Specifically methylates the adenine in position 1618 of 23S rRNA. This Pseudomonas paraeruginosa (strain DSM 24068 / PA7) (Pseudomonas aeruginosa (strain PA7)) protein is Ribosomal RNA large subunit methyltransferase F.